The sequence spans 490 residues: Cytochrome P450 2C9 (490 aa).

C435 contributes to the heme binding site.

This sequence belongs to the cytochrome P450 family. Heme serves as cofactor.

Its subcellular location is the endoplasmic reticulum membrane. It is found in the microsome membrane. It catalyses the reaction an organic molecule + reduced [NADPH--hemoprotein reductase] + O2 = an alcohol + oxidized [NADPH--hemoprotein reductase] + H2O + H(+). The catalysed reaction is (5Z,8Z,11Z,14Z)-eicosatetraenoate + reduced [NADPH--hemoprotein reductase] + O2 = (8R,9S)-epoxy-(5Z,11Z,14Z)-eicosatrienoate + oxidized [NADPH--hemoprotein reductase] + H2O + H(+). It carries out the reaction (5Z,8Z,11Z,14Z)-eicosatetraenoate + reduced [NADPH--hemoprotein reductase] + O2 = (8S,9R)-epoxy-(5Z,11Z,14Z)-eicosatrienoate + oxidized [NADPH--hemoprotein reductase] + H2O + H(+). The enzyme catalyses (5Z,8Z,11Z,14Z)-eicosatetraenoate + reduced [NADPH--hemoprotein reductase] + O2 = (11R,12S)-epoxy-(5Z,8Z,14Z)-eicosatrienoate + oxidized [NADPH--hemoprotein reductase] + H2O + H(+). It catalyses the reaction (5Z,8Z,11Z,14Z)-eicosatetraenoate + reduced [NADPH--hemoprotein reductase] + O2 = (11S,12R)-epoxy-(5Z,8Z,14Z)-eicosatrienoate + oxidized [NADPH--hemoprotein reductase] + H2O + H(+). The catalysed reaction is (5Z,8Z,11Z,14Z)-eicosatetraenoate + reduced [NADPH--hemoprotein reductase] + O2 = (14R,15S)-epoxy-(5Z,8Z,11Z)-eicosatrienoate + oxidized [NADPH--hemoprotein reductase] + H2O + H(+). It carries out the reaction (5Z,8Z,11Z,14Z)-eicosatetraenoate + reduced [NADPH--hemoprotein reductase] + O2 = (14S,15R)-epoxy-(5Z,8Z,11Z)-eicosatrienoate + oxidized [NADPH--hemoprotein reductase] + H2O + H(+). The enzyme catalyses (5Z,8Z,11Z,14Z,17Z)-eicosapentaenoate + reduced [NADPH--hemoprotein reductase] + O2 = 8,9-epoxy-(5Z,11Z,14Z,17Z)-eicosatetraenoate + oxidized [NADPH--hemoprotein reductase] + H2O + H(+). It catalyses the reaction (5Z,8Z,11Z,14Z,17Z)-eicosapentaenoate + reduced [NADPH--hemoprotein reductase] + O2 = 11,12-epoxy-(5Z,8Z,14Z,17Z)-eicosatetraenoate + oxidized [NADPH--hemoprotein reductase] + H2O + H(+). The catalysed reaction is (5Z,8Z,11Z,14Z,17Z)-eicosapentaenoate + reduced [NADPH--hemoprotein reductase] + O2 = 14,15-epoxy-(5Z,8Z,11Z,17Z)-eicosatetraenoate + oxidized [NADPH--hemoprotein reductase] + H2O + H(+). It carries out the reaction (5Z,8Z,11Z,14Z,17Z)-eicosapentaenoate + reduced [NADPH--hemoprotein reductase] + O2 = (17R,18S)-epoxy-(5Z,8Z,11Z,14Z)-eicosatetraenoate + oxidized [NADPH--hemoprotein reductase] + H2O + H(+). The enzyme catalyses cholesterol + reduced [NADPH--hemoprotein reductase] + O2 = 25-hydroxycholesterol + oxidized [NADPH--hemoprotein reductase] + H2O + H(+). It catalyses the reaction 17beta-estradiol + reduced [NADPH--hemoprotein reductase] + O2 = 2-hydroxy-17beta-estradiol + oxidized [NADPH--hemoprotein reductase] + H2O + H(+). The catalysed reaction is estrone + reduced [NADPH--hemoprotein reductase] + O2 = 2-hydroxyestrone + oxidized [NADPH--hemoprotein reductase] + H2O + H(+). It carries out the reaction (5Z,8Z,11Z,14Z)-eicosatetraenoate + reduced [NADPH--hemoprotein reductase] + O2 = (11R)-hydroxy-(5Z,8Z,12E,14Z)-eicosatetraenoate + oxidized [NADPH--hemoprotein reductase] + H2O + H(+). The enzyme catalyses (5Z,8Z,11Z,14Z)-eicosatetraenoate + reduced [NADPH--hemoprotein reductase] + O2 = (12R)-hydroxy-(5Z,8Z,10E,14Z)-eicosatetraenoate + oxidized [NADPH--hemoprotein reductase] + H2O + H(+). It catalyses the reaction (5Z,8Z,11Z,14Z)-eicosatetraenoate + reduced [NADPH--hemoprotein reductase] + O2 = (15R)-hydroxy-(5Z,8Z,11Z,13E)-eicosatetraenoate + oxidized [NADPH--hemoprotein reductase] + H2O + H(+). The catalysed reaction is (5Z,8Z,11Z,14Z)-eicosatetraenoate + reduced [NADPH--hemoprotein reductase] + O2 = 10-hydroxy-(5Z,8Z,11Z,14Z)-eicosatetraenoate + oxidized [NADPH--hemoprotein reductase] + H2O + H(+). It carries out the reaction (9Z,12Z)-octadecadienoate + reduced [NADPH--hemoprotein reductase] + O2 = (13R)-hydroxy-(9Z,11E)-octadecadienoate + oxidized [NADPH--hemoprotein reductase] + H2O + H(+). The enzyme catalyses (9Z,12Z)-octadecadienoate + reduced [NADPH--hemoprotein reductase] + O2 = (9R)-hydroxy-(10E,12Z)-octadecadienoate + oxidized [NADPH--hemoprotein reductase] + H2O + H(+). It catalyses the reaction (5Z,8Z,11Z,14Z)-eicosatetraenoate + reduced [NADPH--hemoprotein reductase] + O2 = 19-hydroxy-(5Z,8Z,11Z,14Z)-eicosatetraenoate + oxidized [NADPH--hemoprotein reductase] + H2O + H(+). The catalysed reaction is (5Z,8Z,11Z,14Z)-eicosatetraenoate + reduced [NADPH--hemoprotein reductase] + O2 = 13(S)-hydroxy-(5Z,8Z,11Z,14Z)-eicosatetraenoate + oxidized [NADPH--hemoprotein reductase] + H2O + H(+). It carries out the reaction (5Z,8Z,11Z,14Z)-eicosatetraenoate + reduced [NADPH--hemoprotein reductase] + O2 = 14,15-epoxy-(5Z,8Z,11Z)-eicosatrienoate + oxidized [NADPH--hemoprotein reductase] + H2O + H(+). The enzyme catalyses (5Z,8Z,11Z,14Z)-eicosatetraenoate + reduced [NADPH--hemoprotein reductase] + O2 = 11,12-epoxy-(5Z,8Z,14Z)-eicosatrienoate + oxidized [NADPH--hemoprotein reductase] + H2O + H(+). It catalyses the reaction (5Z,8Z,11Z,14Z)-eicosatetraenoate + reduced [NADPH--hemoprotein reductase] + O2 = 13-hydroxy-(5Z,8Z,11Z,14Z)-eicosatetraenoate + oxidized [NADPH--hemoprotein reductase] + H2O + H(+). The catalysed reaction is (4R)-limonene + reduced [NADPH--hemoprotein reductase] + O2 = (1R,5S)-carveol + oxidized [NADPH--hemoprotein reductase] + H2O + H(+). It carries out the reaction (4S)-limonene + reduced [NADPH--hemoprotein reductase] + O2 = (1S,5R)-carveol + oxidized [NADPH--hemoprotein reductase] + H2O + H(+). The enzyme catalyses (4S)-limonene + reduced [NADPH--hemoprotein reductase] + O2 = (4S)-perillyl alcohol + oxidized [NADPH--hemoprotein reductase] + H2O + H(+). It functions in the pathway lipid metabolism; arachidonate metabolism. It participates in steroid metabolism; cholesterol metabolism. The protein operates within terpene metabolism; (4R)-limonene degradation. Functionally, a cytochrome P450 monooxygenase involved in the metabolism of various endogenous substrates, including fatty acids and steroids. Mechanistically, uses molecular oxygen inserting one oxygen atom into a substrate, and reducing the second into a water molecule, with two electrons provided by NADPH via cytochrome P450 reductase (NADPH--hemoprotein reductase). Catalyzes the epoxidation of double bonds of polyunsaturated fatty acids (PUFA). Catalyzes the hydroxylation of carbon-hydrogen bonds. Metabolizes cholesterol toward 25-hydroxycholesterol, a physiological regulator of cellular cholesterol homeostasis. Exhibits low catalytic activity for the formation of catechol estrogens from 17beta-estradiol (E2) and estrone (E1), namely 2-hydroxy E1 and E2. Catalyzes bisallylic hydroxylation and hydroxylation with double-bond migration of polyunsaturated fatty acids (PUFA). Also metabolizes plant monoterpenes such as limonene. Oxygenates (R)- and (S)-limonene to produce carveol and perillyl alcohol. Contributes to the wide pharmacokinetics variability of the metabolism of drugs such as S-warfarin, diclofenac, phenytoin, tolbutamide and losartan. The protein is Cytochrome P450 2C9 of Homo sapiens (Human).